A 91-amino-acid chain; its full sequence is Putative septation protein SpoVG (91 aa).

This sequence belongs to the SpoVG family.

In terms of biological role, could be involved in septation. The polypeptide is Putative septation protein SpoVG (Clostridium botulinum (strain Alaska E43 / Type E3)).